The primary structure comprises 444 residues: Glutamate--tRNA ligase 1 (444 aa).

The 'HIGH' region signature appears at 7 to 17 (PSPTGYLHVGN). The short motif at 238-242 (KISKR) is the 'KMSKS' region element. Position 241 (lysine 241) interacts with ATP.

It belongs to the class-I aminoacyl-tRNA synthetase family. Glutamate--tRNA ligase type 1 subfamily. As to quaternary structure, monomer.

It is found in the cytoplasm. It carries out the reaction tRNA(Glu) + L-glutamate + ATP = L-glutamyl-tRNA(Glu) + AMP + diphosphate. Functionally, catalyzes the attachment of glutamate to tRNA(Glu) in a two-step reaction: glutamate is first activated by ATP to form Glu-AMP and then transferred to the acceptor end of tRNA(Glu). The sequence is that of Glutamate--tRNA ligase 1 from Wolbachia pipientis subsp. Culex pipiens (strain wPip).